Here is a 230-residue protein sequence, read N- to C-terminus: Cytochrome c oxidase subunit 2 (230 aa).

The Mitochondrial intermembrane portion of the chain corresponds to 1 to 14 (MAHPSQLGFQDAAS). The chain crosses the membrane as a helical span at residues 15–45 (PVMEELLHFHDHALMIVFLISTLVLYIIAAT). The Mitochondrial matrix segment spans residues 46–59 (ASTKLTDKYILDSQ). Residues 60–87 (EIEVIWTIMPAVILILIALPSLRILYLM) traverse the membrane as a helical segment. The Mitochondrial intermembrane portion of the chain corresponds to 88 to 230 (DEINDPHLTV…NWSSLMLEDA (143 aa)). Cu cation-binding residues include His161, Cys196, Glu198, Cys200, His204, and Met207. Glu198 lines the Mg(2+) pocket.

The protein belongs to the cytochrome c oxidase subunit 2 family. In terms of assembly, component of the cytochrome c oxidase (complex IV, CIV), a multisubunit enzyme composed of 14 subunits. The complex is composed of a catalytic core of 3 subunits MT-CO1, MT-CO2 and MT-CO3, encoded in the mitochondrial DNA, and 11 supernumerary subunits COX4I, COX5A, COX5B, COX6A, COX6B, COX6C, COX7A, COX7B, COX7C, COX8 and NDUFA4, which are encoded in the nuclear genome. The complex exists as a monomer or a dimer and forms supercomplexes (SCs) in the inner mitochondrial membrane with NADH-ubiquinone oxidoreductase (complex I, CI) and ubiquinol-cytochrome c oxidoreductase (cytochrome b-c1 complex, complex III, CIII), resulting in different assemblies (supercomplex SCI(1)III(2)IV(1) and megacomplex MCI(2)III(2)IV(2)). Found in a complex with TMEM177, COA6, COX18, COX20, SCO1 and SCO2. Interacts with TMEM177 in a COX20-dependent manner. Interacts with COX20. Interacts with COX16. Cu cation is required as a cofactor.

The protein resides in the mitochondrion inner membrane. The catalysed reaction is 4 Fe(II)-[cytochrome c] + O2 + 8 H(+)(in) = 4 Fe(III)-[cytochrome c] + 2 H2O + 4 H(+)(out). Component of the cytochrome c oxidase, the last enzyme in the mitochondrial electron transport chain which drives oxidative phosphorylation. The respiratory chain contains 3 multisubunit complexes succinate dehydrogenase (complex II, CII), ubiquinol-cytochrome c oxidoreductase (cytochrome b-c1 complex, complex III, CIII) and cytochrome c oxidase (complex IV, CIV), that cooperate to transfer electrons derived from NADH and succinate to molecular oxygen, creating an electrochemical gradient over the inner membrane that drives transmembrane transport and the ATP synthase. Cytochrome c oxidase is the component of the respiratory chain that catalyzes the reduction of oxygen to water. Electrons originating from reduced cytochrome c in the intermembrane space (IMS) are transferred via the dinuclear copper A center (CU(A)) of subunit 2 and heme A of subunit 1 to the active site in subunit 1, a binuclear center (BNC) formed by heme A3 and copper B (CU(B)). The BNC reduces molecular oxygen to 2 water molecules using 4 electrons from cytochrome c in the IMS and 4 protons from the mitochondrial matrix. This is Cytochrome c oxidase subunit 2 (mt-co2) from Tetraodon nigroviridis (Spotted green pufferfish).